The primary structure comprises 252 residues: Probable transcriptional regulatory protein Ava_1228 (252 aa).

It belongs to the TACO1 family.

It is found in the cytoplasm. The chain is Probable transcriptional regulatory protein Ava_1228 from Trichormus variabilis (strain ATCC 29413 / PCC 7937) (Anabaena variabilis).